A 78-amino-acid polypeptide reads, in one-letter code: Large ribosomal subunit protein bL28 (78 aa).

Residues 1–28 (MSRRCQVRGTKPEFGNNVSHSQRHTKRR) form a disordered region.

It belongs to the bacterial ribosomal protein bL28 family.

The polypeptide is Large ribosomal subunit protein bL28 (Cutibacterium acnes (strain DSM 16379 / KPA171202) (Propionibacterium acnes)).